The primary structure comprises 220 residues: DNA replication complex GINS protein SLD5 (220 aa).

The protein belongs to the GINS4/SLD5 family. In terms of assembly, component of the GINS complex. Interacts with EOL1 in the nucleus.

It localises to the nucleus. Functionally, the GINS complex plays an essential role in the initiation of DNA replication. Required during embryogenesis. The sequence is that of DNA replication complex GINS protein SLD5 from Arabidopsis thaliana (Mouse-ear cress).